Reading from the N-terminus, the 668-residue chain is Metastasis-associated protein MTA2 (668 aa).

Residues Met1 to Gln144 enclose the BAH domain. Phosphoserine is present on residues Ser52 and Ser54. The 112-residue stretch at Gly145 to Gly256 folds into the ELM2 domain. Lys152 bears the N6-acetyllysine mark. The SANT domain occupies Asp263–Arg315. A GATA-type; atypical zinc finger spans residues Cys367–Cys394. Residues Gly412–Tyr437 are disordered. Phosphoserine is present on residues Ser433 and Ser435. Lys460 carries the post-translational modification N6-acetyllysine. Residue Lys492 forms a Glycyl lysine isopeptide (Lys-Gly) (interchain with G-Cter in SUMO2 and SUMO3); alternate linkage. A Glycyl lysine isopeptide (Lys-Gly) (interchain with G-Cter in SUMO2); alternate cross-link involves residue Lys492. Lys508 participates in a covalent cross-link: Glycyl lysine isopeptide (Lys-Gly) (interchain with G-Cter in SUMO2). Lys522 and Lys531 each carry N6-acetyllysine. Position 534 is a phosphothreonine (Thr534). Residues Lys559 and Lys595 each participate in a glycyl lysine isopeptide (Lys-Gly) (interchain with G-Cter in SUMO2) cross-link. 2 disordered regions span residues Ala580 to Ala599 and Pro647 to Asp668.

Belongs to the metastasis-associated protein family. As to quaternary structure, component of the nucleosome remodeling and deacetylase (NuRD) repressor complex, composed of core proteins MTA1, MTA2, MTA3, RBBP4, RBBP7, HDAC1, HDAC2, MBD2, MBD3, and peripherally associated proteins CDK2AP1, CDK2AP2, GATAD2A, GATAD2B, CHD3, CHD4 and CHD5. The exact stoichiometry of the NuRD complex is unknown, and some subunits such as MBD2 and MBD3, GATAD2A and GATAD2B, and CHD3, CHD4 and CHD5 define mutually exclusive NuRD complexes. Interacts with CHD3. Interacts with CHD4. Interacts with GATAD2A. Interacts with HDAC7. Interacts with MBD3. Interacts with p53/TP53. Interacts with MINT. Interacts with PIMREG. Interacts with NACC2. Interacts with ERCC6. Interacts with PWWP2B. Interacts with transcription factor BCL11A.

The protein resides in the nucleus. Its function is as follows. May function as a transcriptional coregulator. Acts as a component of the histone deacetylase NuRD complex which participates in the remodeling of chromatin. The polypeptide is Metastasis-associated protein MTA2 (Mta2) (Mus musculus (Mouse)).